The chain runs to 442 residues: Mimosinase, chloroplastic (442 aa).

The transit peptide at Met-1–Cys-35 directs the protein to the chloroplast. 6 residues coordinate pyridoxal 5'-phosphate: Tyr-103, Arg-105, Gly-133, Met-134, Ser-252, and Thr-254. Position 255 is an N6-(pyridoxal phosphate)lysine (Lys-255).

The protein belongs to the trans-sulfuration enzymes family. Forms homodimers. May form homotetramers from two homodimers. Pyridoxal 5'-phosphate is required as a cofactor.

Its subcellular location is the plastid. It localises to the chloroplast. It carries out the reaction L-mimosine + H2O = 3-hydroxy-4H-pyrid-4-one + pyruvate + NH4(+). The catalysed reaction is L,L-cystathionine + H2O = L-homocysteine + pyruvate + NH4(+). It catalyses the reaction an S-substituted L-cysteine + H2O = a thiol + pyruvate + NH4(+). Functionally, catalyzes the degradation of mimosine, which is a toxic secondary metabolite found in all Mimosa and Leucaena species. Catalyzes the degradation of cystathionine, but seems to have lower preference toward cystathionine over mimosine. The chain is Mimosinase, chloroplastic from Mimosa pudica (Sensitive plant).